Reading from the N-terminus, the 81-residue chain is Costars family protein ABRACL (81 aa).

Methionine 1 carries the N-acetylmethionine modification.

The protein belongs to the costars family.

This chain is Costars family protein ABRACL (Abracl), found in Mus musculus (Mouse).